We begin with the raw amino-acid sequence, 247 residues long: Carboxy-S-adenosyl-L-methionine synthase (247 aa).

Residues Tyr39, 64–66 (GCS), 89–90 (DN), 117–118 (DI), Asn132, and Arg199 each bind S-adenosyl-L-methionine.

The protein belongs to the class I-like SAM-binding methyltransferase superfamily. Cx-SAM synthase family. In terms of assembly, homodimer.

It catalyses the reaction prephenate + S-adenosyl-L-methionine = carboxy-S-adenosyl-L-methionine + 3-phenylpyruvate + H2O. Its function is as follows. Catalyzes the conversion of S-adenosyl-L-methionine (SAM) to carboxy-S-adenosyl-L-methionine (Cx-SAM). The polypeptide is Carboxy-S-adenosyl-L-methionine synthase (Salmonella arizonae (strain ATCC BAA-731 / CDC346-86 / RSK2980)).